The primary structure comprises 396 residues: Initiation-specific alpha-1,6-mannosyltransferase (396 aa).

Topologically, residues 1-7 (MLRLRLR) are cytoplasmic. Residues 8 to 28 (SIVIGAAIAGSILLLFNHGSI) form a helical; Signal-anchor for type II membrane protein membrane-spanning segment. Over 29-396 (EGMEDLTEIS…HFFAGSWKDD (368 aa)) the chain is Lumenal. A DXD motif motif is present at residues 229–231 (DID). A glycan (N-linked (GlcNAc...) asparagine) is linked at Asn345.

It belongs to the glycosyltransferase 32 family. Requires Mn(2+) as cofactor.

The protein resides in the endoplasmic reticulum membrane. It localises to the golgi apparatus membrane. It catalyses the reaction Transfers an alpha-D-mannosyl residue from GDP-mannose into lipid-linked oligosaccharide, forming an alpha-(1-&gt;6)-D-mannosyl-D-mannose linkage.. Functionally, mannosyltransferase involved in outer chain elongation of asparagine-linked oligosaccharides of the type Man(9)GlcNAc(2). May otherwise add the first alpha-1,6-mannose to the Man(8)GlcNAc(2) core oligosaccharide from the ER. Represents the first enzymatic event required for synthesis of outer chain mannose linkages on yeast secretory proteins. The protein is Initiation-specific alpha-1,6-mannosyltransferase of Schizosaccharomyces pombe (strain 972 / ATCC 24843) (Fission yeast).